The primary structure comprises 453 residues: Cytochrome P450 monooxygenase CYP2 (453 aa).

A helical membrane pass occupies residues 13 to 29; the sequence is MVITMLHGSSTYSLLAS. Residue Asn85 is glycosylated (N-linked (GlcNAc...) asparagine). Cys397 lines the heme pocket.

It belongs to the cytochrome P450 family. Heme serves as cofactor.

It localises to the membrane. The protein operates within secondary metabolite biosynthesis. Functionally, cytochrome P450 monooxygenase; part of the gene cluster that mediates the biosynthesis of a tyrosine-derived cytochalasan acting as a fungal signal recognized by resistant rice plants and leads to avirulence in Pi33 resistant rice cultivars. The first step in the pathway is catalyzed by the hybrid PKS-NRPS ACE1, assisted by the enoyl reductase RAP1, that are responsible for fusion of the tyrosine precursor and the polyketide backbone. The polyketide synthase module (PKS) of ACE1 is responsible for the synthesis of the polyketide backbone and the downstream nonribosomal peptide synthetase (NRPS) amidates the carboxyl end of the polyketide with the tyrosine precursor. Because ACE1 lacks a designated enoylreductase (ER) domain, the required activity is provided the enoyl reductase RAP1. Reduction by the hydrolyase ORFZ, followed by dehydration and intra-molecular Diels-Alder cyclization by the Diels-Alderase ORF3 then yield the required isoindolone-fused macrocycle. A number of oxidative steps catalyzed by the tailoring enzymes identified within the cluster, including cytochrome P450 monooxygenases CYP1 to CYP4, the FAD-linked oxidoreductase OXR2 and the short-chain dehydrogenase/reductase OXR1, are further required to afford the final cytochalasans that confer avirulence and which have still to be identified. The monooxygenase CYP1 has been shown to be a site-selective C-18 hydroxylase whereas the function of CYP3 is the site-selective epoxidation of the C-6/C-7 olefin that is present in some intermediate compounds. Finally, SYN2 and RAP2 are not required for avirulence in Pi33 resistant rice cultivars. In Pyricularia oryzae (strain 70-15 / ATCC MYA-4617 / FGSC 8958) (Rice blast fungus), this protein is Cytochrome P450 monooxygenase CYP2.